The primary structure comprises 477 residues: Histidine--tRNA ligase (477 aa).

It belongs to the class-II aminoacyl-tRNA synthetase family. As to quaternary structure, homodimer.

Its subcellular location is the cytoplasm. The enzyme catalyses tRNA(His) + L-histidine + ATP = L-histidyl-tRNA(His) + AMP + diphosphate + H(+). This Xanthomonas campestris pv. campestris (strain 8004) protein is Histidine--tRNA ligase.